The chain runs to 709 residues: Elongation factor G (709 aa).

One can recognise a tr-type G domain in the interval 9–296 (AKVRNIGIMA…AVVRYLPSPL (288 aa)). GTP is bound by residues 18 to 25 (AHIDAGKT), 86 to 90 (DTPGH), and 140 to 143 (NKLD).

Belongs to the TRAFAC class translation factor GTPase superfamily. Classic translation factor GTPase family. EF-G/EF-2 subfamily.

It localises to the cytoplasm. Catalyzes the GTP-dependent ribosomal translocation step during translation elongation. During this step, the ribosome changes from the pre-translocational (PRE) to the post-translocational (POST) state as the newly formed A-site-bound peptidyl-tRNA and P-site-bound deacylated tRNA move to the P and E sites, respectively. Catalyzes the coordinated movement of the two tRNA molecules, the mRNA and conformational changes in the ribosome. The chain is Elongation factor G from Streptomyces griseus subsp. griseus (strain JCM 4626 / CBS 651.72 / NBRC 13350 / KCC S-0626 / ISP 5235).